The sequence spans 1644 residues: Peroxisome proliferator-activated receptor gamma coactivator-related protein 1 (1644 aa).

Disordered regions lie at residues 1 to 61 (MAAR…DSSF), 170 to 249 (PERD…EVAG), 429 to 616 (LTPK…TSPV), 646 to 761 (AADP…PETP), 773 to 884 (SAPA…QPPG), 978 to 1074 (STVS…EGVV), and 1322 to 1507 (AAPP…NDHY). Residues 12-22 (APPPTGGPGPD) are compositionally biased toward pro residues. A compositionally biased stretch (low complexity) spans 213-222 (SSPKLPSWRP). A Phosphoserine modification is found at S232. A necessary for interaction with CREB1 and NRF1 and for transcriptional coactivation region spans residues 425–460 (IMESLTPKEPQSLPASASQGSQKVPRKGRKKKNKEQ). The segment covering 437–446 (LPASASQGSQ) has biased composition (polar residues). Positions 448-457 (VPRKGRKKKN) are enriched in basic residues. The span at 475 to 496 (SSRGQSTVSAEVNSQAGSSQKQ) shows a compositional bias: polar residues. The segment covering 515–524 (RAWARAWAAA) has biased composition (low complexity). Position 541 is a phosphoserine (S541). Over residues 556 to 572 (ETSQANPTLSLNDSAQA) the composition is skewed to polar residues. Residues 691–702 (DHPKVVSPEGKD) show a composition bias toward basic and acidic residues. Residues 811–821 (MVSTHSEQVSS) are compositionally biased toward polar residues. 2 stretches are compositionally biased toward pro residues: residues 828-864 (VRPP…PLLP) and 874-884 (RLPPPPLQPPG). Phosphoserine is present on residues S1059, S1393, and S1395. The interval 1361–1432 (EASPCRSEMN…SSSSSVSSSS (72 aa)) is necessary for interaction with CREB1 and NRF1. Low complexity-rich tracts occupy residues 1409-1433 (SRSV…SSSR) and 1453-1489 (SSCS…VSPC). Positions 1523-1599 (RVVFIGKIPG…QPFDLCFGGR (77 aa)) constitute an RRM domain.

In terms of assembly, interacts with CREB1 and NRF1. In terms of tissue distribution, expressed in liver, heart, skeletal muscle, kidney and white and brown adipose tissues.

The protein resides in the nucleus. Functionally, acts as a coactivator during transcriptional activation of nuclear genes related to mitochondrial biogenesis and cell growth. Involved in the transcription coactivation of CREB and NRF1 target genes. In Mus musculus (Mouse), this protein is Peroxisome proliferator-activated receptor gamma coactivator-related protein 1 (Pprc1).